Reading from the N-terminus, the 423-residue chain is CinA-like protein (423 aa).

This sequence belongs to the CinA family.

This is CinA-like protein from Synechococcus sp. (strain CC9311).